We begin with the raw amino-acid sequence, 537 residues long: Cytochrome c oxidase subunit 1 (537 aa).

A helical membrane pass occupies residues 22-42 (ILYLLFGLVSGIIGSVFSFII). Positions 45, 48, and 50 each coordinate Ca(2+). Residue H68 coordinates Fe(II)-heme a. A run of 8 helical transmembrane segments spans residues 70–90 (ILMIFFFIIPALFGAFGNYLV), 104–124 (VNNFTFWLLPPALMLLLISAL), 152–172 (LAILSLQLTGISSTLGSVNLI), 190–210 (LFAWAIMITSILLLLTLPVLA), 241–261 (LFWFFGHPEVYILIMPAFGVV), 279–299 (MLWAMLSIALLGLMVWSHHLF), 318–338 (IAIPTGIKIFSWLATLTGGAI), and 345–365 (MLYAIGFLILFTIGGLTGVIL). H247 lines the Cu cation pocket. Residues 247–251 (HPEVY) constitute a cross-link (1'-histidyl-3'-tyrosine (His-Tyr)). Y251 provides a ligand contact to O2. Positions 296 and 297 each coordinate Cu cation. Residues H375 and D376 each contribute to the Mg(2+) site. 2 consecutive transmembrane segments (helical) span residues 379-399 (FVVAHFHYVLSMGALFGLCGA) and 418-438 (IQFWILFIGVNIVFGPQHFLG). H383 is a heme a3 binding site. Residue H385 coordinates Fe(II)-heme a. P447 provides a ligand contact to Ca(2+). The helical transmembrane segment at 458–478 (FVSSIGSVISILSLFLFMYVM) threads the bilayer.

It belongs to the heme-copper respiratory oxidase family. In terms of assembly, component of the cytochrome c oxidase (complex IV, CIV), a multisubunit enzyme composed of a catalytic core of 3 subunits and several supernumerary subunits. The complex exists as a monomer or a dimer and forms supercomplexes (SCs) in the inner mitochondrial membrane with ubiquinol-cytochrome c oxidoreductase (cytochrome b-c1 complex, complex III, CIII). The cofactor is heme. Cu cation is required as a cofactor.

It is found in the mitochondrion inner membrane. The catalysed reaction is 4 Fe(II)-[cytochrome c] + O2 + 8 H(+)(in) = 4 Fe(III)-[cytochrome c] + 2 H2O + 4 H(+)(out). Its pathway is energy metabolism; oxidative phosphorylation. Functionally, component of the cytochrome c oxidase, the last enzyme in the mitochondrial electron transport chain which drives oxidative phosphorylation. The respiratory chain contains 3 multisubunit complexes succinate dehydrogenase (complex II, CII), ubiquinol-cytochrome c oxidoreductase (cytochrome b-c1 complex, complex III, CIII) and cytochrome c oxidase (complex IV, CIV), that cooperate to transfer electrons derived from NADH and succinate to molecular oxygen, creating an electrochemical gradient over the inner membrane that drives transmembrane transport and the ATP synthase. Cytochrome c oxidase is the component of the respiratory chain that catalyzes the reduction of oxygen to water. Electrons originating from reduced cytochrome c in the intermembrane space (IMS) are transferred via the dinuclear copper A center (CU(A)) of subunit 2 and heme A of subunit 1 to the active site in subunit 1, a binuclear center (BNC) formed by heme A3 and copper B (CU(B)). The BNC reduces molecular oxygen to 2 water molecules using 4 electrons from cytochrome c in the IMS and 4 protons from the mitochondrial matrix. The chain is Cytochrome c oxidase subunit 1 (cox1) from Schizosaccharomyces pombe (strain 972 / ATCC 24843) (Fission yeast).